We begin with the raw amino-acid sequence, 400 residues long: Multidrug resistance protein 2 (400 aa).

11 helical membrane-spanning segments follow: residues 11-31, 46-66, 78-98, 106-126, 142-162, 164-184, 213-233, 253-273, 297-317, 346-366, and 368-388; these read IFIILLSNIFVAFLGIGLIIP, TMGYLVAAFAISQLITSPFAG, IILGLLIFSLSELIFGLGTHV, ILGGVSAAFIMPAVTAYVADI, AISTGFIIGPGAGGFIAGFGI, MPFFFASAIALIAAVTSVFIL, IHPVYFIAFIIVFVMAFGLSA, IAAIITISSIVAVVIQVLLFG, FVSTVMSGFLTVLLVTCFIFL, STYTSLGNIFGPALGGILFDL, and IHYPFLFAGFVMIVGLGLTMV.

The protein belongs to the major facilitator superfamily. TCR/Tet family.

It localises to the cell membrane. Functionally, energy-dependent efflux pump responsible for decreased drug accumulation in multi-drug-resistant cells. Probably uses a transmembrane proton gradient as the energy source. Causes the efflux of a variety of toxic substances, including such structurally diverse compounds as ethidium bromide, rhodamine and acridine dyes, tetraphenylphosphonium, puromycin, chloramphenicol, doxorubicin, and fluoroquinolone antibiotics. This Bacillus subtilis (strain 168) protein is Multidrug resistance protein 2 (blt).